The chain runs to 486 residues: Iron-sulfur cluster assembly SufBD family protein ycf24 (486 aa).

It belongs to the iron-sulfur cluster assembly SufBD family.

It localises to the plastid. The protein localises to the chloroplast. In Trieres chinensis (Marine centric diatom), this protein is Iron-sulfur cluster assembly SufBD family protein ycf24 (ycf24).